We begin with the raw amino-acid sequence, 136 residues long: Protein NrdI (136 aa).

This sequence belongs to the NrdI family.

Probably involved in ribonucleotide reductase function. The protein is Protein NrdI of Escherichia coli O127:H6 (strain E2348/69 / EPEC).